Here is a 400-residue protein sequence, read N- to C-terminus: PHD finger protein 24 (400 aa).

Residue Gly2 is the site of N-myristoyl glycine attachment. Residues 28–38 (LRDRPSIRRTG) are compositionally biased toward basic and acidic residues. Residues 28–99 (LRDRPSIRRT…PEEFDRTSRF (72 aa)) form a disordered region. Arg36 carries the post-translational modification Omega-N-methylarginine. Ser43 carries the post-translational modification Phosphoserine. At Thr47 the chain carries Phosphothreonine. Ser51 is subject to Phosphoserine. The span at 78-97 (AWERLRDGRGVEPEEFDRTS) shows a compositional bias: basic and acidic residues. The PHD-type zinc-finger motif lies at 129-190 (NDEMCDVCEV…TGWSCHYCDN (62 aa)).

The sequence is that of PHD finger protein 24 from Homo sapiens (Human).